Reading from the N-terminus, the 354-residue chain is Probable L-ascorbate-6-phosphate lactonase UlaG (354 aa).

This sequence belongs to the UlaG family. A divalent metal cation is required as a cofactor.

The protein localises to the cytoplasm. It catalyses the reaction L-ascorbate 6-phosphate + H2O = 3-dehydro-L-gulonate 6-phosphate. It participates in cofactor degradation; L-ascorbate degradation; D-xylulose 5-phosphate from L-ascorbate: step 1/4. In terms of biological role, probably catalyzes the hydrolysis of L-ascorbate-6-P into 3-keto-L-gulonate-6-P. Is essential for L-ascorbate utilization under anaerobic conditions. This Shigella flexneri protein is Probable L-ascorbate-6-phosphate lactonase UlaG.